Here is a 691-residue protein sequence, read N- to C-terminus: ATP-dependent RNA helicase MRH4, mitochondrial (691 aa).

The N-terminal 31 residues, M1–A31, are a transit peptide targeting the mitochondrion. The disordered stretch occupies residues A31 to R148. Polar residues predominate over residues Q39–R49. Basic and acidic residues predominate over residues Q50–R68. Positions S94–S103 are enriched in low complexity. A compositionally biased stretch (polar residues) spans V111–T126. The short motif at R183–T213 is the Q motif element. The region spanning A225–E433 is the Helicase ATP-binding domain. A238–T245 contacts ATP. Positions D382–D385 match the DEAD box motif. The 218-residue stretch at T474–T691 folds into the Helicase C-terminal domain. Positions L644–A667 are disordered.

It belongs to the DEAD box helicase family. MRH4 subfamily.

It localises to the mitochondrion. It carries out the reaction ATP + H2O = ADP + phosphate + H(+). Its function is as follows. ATP-binding RNA helicase involved in mitochondrial RNA metabolism. Required for maintenance of mitochondrial DNA. In Cryptococcus neoformans var. neoformans serotype D (strain JEC21 / ATCC MYA-565) (Filobasidiella neoformans), this protein is ATP-dependent RNA helicase MRH4, mitochondrial (MRH4).